The chain runs to 272 residues: 3-methyl-2-oxobutanoate hydroxymethyltransferase (272 aa).

Positions 51 and 90 each coordinate Mg(2+). 3-methyl-2-oxobutanoate contacts are provided by residues 51 to 52 (DS), aspartate 90, and lysine 118. Mg(2+) is bound at residue glutamate 120. The Proton acceptor role is filled by glutamate 187.

It belongs to the PanB family. As to quaternary structure, homodecamer; pentamer of dimers. Requires Mg(2+) as cofactor.

The protein resides in the cytoplasm. It catalyses the reaction 3-methyl-2-oxobutanoate + (6R)-5,10-methylene-5,6,7,8-tetrahydrofolate + H2O = 2-dehydropantoate + (6S)-5,6,7,8-tetrahydrofolate. Its pathway is cofactor biosynthesis; (R)-pantothenate biosynthesis; (R)-pantoate from 3-methyl-2-oxobutanoate: step 1/2. Catalyzes the reversible reaction in which hydroxymethyl group from 5,10-methylenetetrahydrofolate is transferred onto alpha-ketoisovalerate to form ketopantoate. This is 3-methyl-2-oxobutanoate hydroxymethyltransferase from Xylella fastidiosa (strain 9a5c).